A 462-amino-acid chain; its full sequence is Toxin CfTX-2 (462 aa).

The N-terminal stretch at 1 to 17 (MILVSLLPLLFMTGIAS) is a signal peptide.

Belongs to the jellyfish toxin family. Type I subfamily. Oligomer. In terms of processing, contains disulfide bonds. In terms of tissue distribution, nematocytes.

It is found in the secreted. The protein localises to the nematocyst. It localises to the target cell membrane. May cause profound effects on the cardiovascular system of anesthetized rats (at 25 ug/kg), since the fraction containing this toxin and CfTX-1 produces an initial increase in mean arterial pressure, followed by cardiovascular collapse in all animals within 1 minute of injection. To note, the same fraction does not induce significant change in heart rate. Has weak hemolytic activity. Is lethal to crayfish. Causes cutaneous inflammation in humans. May act as a pore-forming toxin, disrupting normal transmembrane ion concentration gradients in susceptible cells. The chain is Toxin CfTX-2 from Chironex fleckeri (Australian box jellyfish).